A 695-amino-acid chain; its full sequence is MHTFFVTSTGFGVGLTSTSLGLVRALEYGGLKAGFYKPVAQQHPGNSKLEYSTELISRTLGLAPPAPLPLATVEHLLGEGQIDDLMEDIVRRFKQASEGYDVMVVEGMVPTRHVSYASRVNTRLASSLDADIILVSSAEDDALQAITDRIEIQAQFFGGAQNPRLLGVILNKIRTDHSDDLFEQLKNHSTLFHQSSFQILGCIPWEDSLNAPRMADVVTQLQAQIVNAGDSEKRRVQDIVLFASAAPNSVTLLRPGVLVVTPGDRDDIVMAASLAVLNGVPLAGLLLCSDFPPDPRVLELCKGALTKGLPVCTVTTNSYDTAANLHRMNREIPLDDHERAERITNFVANHIRQELLVKRCGEPQEQRLSPPAFRYRLVKRAQEADCRIVLPEGYEPRTIQAATICQERGIARCVLLAKPDAVKAVASARGITLPEGLEMIDPEKVRRNYVAAMVELRKHKGLNEPMALAQLEDNVVLGTMMLATGEVDGLVSGAINTTANTIRPALQLIKTAPGFKLVSSVFFMLLPEQVVVYGDCAVNPNPTAEELADIALQSAASAQALGIEPRVAMLSYSTGDSGSGQEVEKVREATRLARLARPDLLIDGPLQYDAAAIASVGRQKAPGSPVAGRATVFIFPDLNTGNTTYKAVQRSANVVSVGPMLQGLRKPVNDLSRGASVEDIVYTIALTAVQAASQR.

Residues 372–695 (AFRYRLVKRA…LTAVQAASQR (324 aa)) are phosphate acetyltransferase.

The protein in the N-terminal section; belongs to the CobB/CobQ family. It in the C-terminal section; belongs to the phosphate acetyltransferase and butyryltransferase family. In terms of assembly, homohexamer.

It is found in the cytoplasm. It carries out the reaction acetyl-CoA + phosphate = acetyl phosphate + CoA. It functions in the pathway metabolic intermediate biosynthesis; acetyl-CoA biosynthesis; acetyl-CoA from acetate: step 2/2. Its function is as follows. Involved in acetate metabolism. This chain is Phosphate acetyltransferase (pta), found in Nitrosomonas europaea (strain ATCC 19718 / CIP 103999 / KCTC 2705 / NBRC 14298).